Reading from the N-terminus, the 287-residue chain is Large ribosomal subunit protein uL2 (287 aa).

The tract at residues 221–287 (RGSVMNPCDH…SKRSRGGRDS (67 aa)) is disordered. Residues 258–287 (KTRKRNKPSNRFVLRKRRRTSKRSRGGRDS) are compositionally biased toward basic residues.

It belongs to the universal ribosomal protein uL2 family. As to quaternary structure, part of the 50S ribosomal subunit. Forms a bridge to the 30S subunit in the 70S ribosome.

One of the primary rRNA binding proteins. Required for association of the 30S and 50S subunits to form the 70S ribosome, for tRNA binding and peptide bond formation. It has been suggested to have peptidyltransferase activity; this is somewhat controversial. Makes several contacts with the 16S rRNA in the 70S ribosome. This is Large ribosomal subunit protein uL2 from Prochlorococcus marinus (strain MIT 9313).